We begin with the raw amino-acid sequence, 442 residues long: D-inositol 3-phosphate glycosyltransferase (442 aa).

Position 26 (His-26) interacts with 1D-myo-inositol 3-phosphate. Residues 32–33 (QP) and Gly-40 each bind UDP-N-acetyl-alpha-D-glucosamine. Residues 37–42 (DAGGMN), Lys-95, Tyr-128, Thr-152, and Arg-172 each bind 1D-myo-inositol 3-phosphate. Residues Arg-246, Lys-251, and Gln-304 each coordinate UDP-N-acetyl-alpha-D-glucosamine. Residues Tyr-313, Arg-314, and Ala-316 each contribute to the Mg(2+) site. Glu-326 and Glu-334 together coordinate UDP-N-acetyl-alpha-D-glucosamine. Thr-340 contributes to the Mg(2+) binding site.

It belongs to the glycosyltransferase group 1 family. MshA subfamily. Homodimer.

It carries out the reaction 1D-myo-inositol 3-phosphate + UDP-N-acetyl-alpha-D-glucosamine = 1D-myo-inositol 2-acetamido-2-deoxy-alpha-D-glucopyranoside 3-phosphate + UDP + H(+). Catalyzes the transfer of a N-acetyl-glucosamine moiety to 1D-myo-inositol 3-phosphate to produce 1D-myo-inositol 2-acetamido-2-deoxy-glucopyranoside 3-phosphate in the mycothiol biosynthesis pathway. The protein is D-inositol 3-phosphate glycosyltransferase of Mycolicibacterium gilvum (strain PYR-GCK) (Mycobacterium gilvum (strain PYR-GCK)).